Here is a 438-residue protein sequence, read N- to C-terminus: V-type ATP synthase beta chain (438 aa).

This sequence belongs to the ATPase alpha/beta chains family.

Produces ATP from ADP in the presence of a proton gradient across the membrane. The V-type beta chain is a regulatory subunit. This chain is V-type ATP synthase beta chain, found in Chlamydia felis (strain Fe/C-56) (Chlamydophila felis).